A 191-amino-acid chain; its full sequence is Rho-related GTP-binding protein RhoH (191 aa).

11-18 (GDSAVGKT) provides a ligand contact to GTP. Residues 33–41 (YKPTVYENT) carry the Effector region motif. 58 to 62 (DTAGN) serves as a coordination point for GTP. Positions 73–86 (YQQADVVLMCYSVA) are interaction with ZAP70. 116–119 (TQTD) provides a ligand contact to GTP. Cysteine methyl ester is present on C188. A lipid anchor (S-geranylgeranyl cysteine) is attached at C188. The propeptide at 189 to 191 (KIL) is removed in mature form.

This sequence belongs to the small GTPase superfamily. Rho family. Interacts with GDI1 and GDI2. Interacts with ZAP70 (via SH2 domains) and the interaction is enhanced by its phosphorylation by LCK. Interacts with SYK and the interaction is enhanced by its phosphorylation by FYN. Post-translationally, phosphorylated on tyrosine by LCK. Phosphorylated by FYN. Phosphorylation enhances the interactions with ZAP70 and SYK and is critical for its function in thymocyte development.

The protein resides in the cytoplasm. Its subcellular location is the cell membrane. In terms of biological role, binds GTP but lacks intrinsic GTPase activity and is resistant to Rho-specific GTPase-activating proteins. Inhibits the activation of NF-kappa-B by TNF and IKKB and the activation of CRK/p38 by TNF. Inhibits activities of RAC1, RHOA and CDC42. Negatively regulates leukotriene production in neutrophils. Negative regulator of hematopoietic progenitor cell proliferation, survival and migration. Critical regulator of thymocyte development and T-cell antigen receptor (TCR) signaling by mediating recruitment and activation of ZAP70. Required for phosphorylation of CD3Z, membrane translocation of ZAP70 and subsequent activation of the ZAP70-mediated pathways. Essential for efficient beta-selection and positive selection by promoting the ZAP70-dependent phosphorylation of the LAT signalosome during pre-TCR and TCR signaling. Crucial for thymocyte maturation during DN3 to DN4 transition and during positive selection. Plays critical roles in mast cell function by facilitating phosphorylation of SYK in Fc epsilon RI-mediated signal transduction. Essential for the phosphorylation of LAT, LCP2, PLCG1 and PLCG2 and for Ca(2+) mobilization in mast cells. This chain is Rho-related GTP-binding protein RhoH (RHOH), found in Bos taurus (Bovine).